We begin with the raw amino-acid sequence, 36 residues long: Photosystem I reaction center subunit VIII (36 aa).

Residues 9 to 29 traverse the membrane as a helical segment; that stretch reads ILVPLVGLIFPALSMALLFIY.

The protein belongs to the PsaI family.

It is found in the plastid. The protein localises to the chloroplast thylakoid membrane. Functionally, may help in the organization of the PsaL subunit. This Pyropia yezoensis (Susabi-nori) protein is Photosystem I reaction center subunit VIII.